Consider the following 240-residue polypeptide: Lipoprotein-releasing system ATP-binding protein LolD (240 aa).

Residues 15–240 (IRAERLGKTY…GLRELTSAEV (226 aa)) enclose the ABC transporter domain. 51–58 (GASGAGKS) lines the ATP pocket.

The protein belongs to the ABC transporter superfamily. Lipoprotein translocase (TC 3.A.1.125) family. In terms of assembly, the complex is composed of two ATP-binding proteins (LolD) and two transmembrane proteins (LolC and LolE).

The protein localises to the cell inner membrane. In terms of biological role, part of the ABC transporter complex LolCDE involved in the translocation of mature outer membrane-directed lipoproteins, from the inner membrane to the periplasmic chaperone, LolA. Responsible for the formation of the LolA-lipoprotein complex in an ATP-dependent manner. This Xylella fastidiosa (strain 9a5c) protein is Lipoprotein-releasing system ATP-binding protein LolD.